Reading from the N-terminus, the 115-residue chain is Pancreatic progenitor cell differentiation and proliferation factor B (115 aa).

The interval 21 to 48 (IGSTSSSSSCGSSEYSGEVIPHHPGLPK) is disordered. The segment covering 22 to 37 (GSTSSSSSCGSSEYSG) has biased composition (low complexity).

This sequence belongs to the PPDPF family.

Its function is as follows. Probable regulator of exocrine pancreas development. The protein is Pancreatic progenitor cell differentiation and proliferation factor B (ppdpfb) of Danio rerio (Zebrafish).